A 321-amino-acid chain; its full sequence is Lipoyl synthase (321 aa).

Positions 68, 73, 79, 94, 98, 101, and 308 each coordinate [4Fe-4S] cluster. One can recognise a Radical SAM core domain in the interval 80 to 297; it reads FNHGTATFMI…KVIALELGFT (218 aa).

This sequence belongs to the radical SAM superfamily. Lipoyl synthase family. Requires [4Fe-4S] cluster as cofactor.

It localises to the cytoplasm. The catalysed reaction is [[Fe-S] cluster scaffold protein carrying a second [4Fe-4S](2+) cluster] + N(6)-octanoyl-L-lysyl-[protein] + 2 oxidized [2Fe-2S]-[ferredoxin] + 2 S-adenosyl-L-methionine + 4 H(+) = [[Fe-S] cluster scaffold protein] + N(6)-[(R)-dihydrolipoyl]-L-lysyl-[protein] + 4 Fe(3+) + 2 hydrogen sulfide + 2 5'-deoxyadenosine + 2 L-methionine + 2 reduced [2Fe-2S]-[ferredoxin]. The protein operates within protein modification; protein lipoylation via endogenous pathway; protein N(6)-(lipoyl)lysine from octanoyl-[acyl-carrier-protein]: step 2/2. Catalyzes the radical-mediated insertion of two sulfur atoms into the C-6 and C-8 positions of the octanoyl moiety bound to the lipoyl domains of lipoate-dependent enzymes, thereby converting the octanoylated domains into lipoylated derivatives. This Aliivibrio salmonicida (strain LFI1238) (Vibrio salmonicida (strain LFI1238)) protein is Lipoyl synthase.